A 385-amino-acid chain; its full sequence is Putative nickel insertion protein (385 aa).

It belongs to the LarC family.

In Geobacter sp. (strain M21), this protein is Putative nickel insertion protein.